Reading from the N-terminus, the 123-residue chain is Large ribosomal subunit protein uL14 (123 aa).

It belongs to the universal ribosomal protein uL14 family. In terms of assembly, part of the 50S ribosomal subunit. Forms a cluster with proteins L3 and L19. In the 70S ribosome, L14 and L19 interact and together make contacts with the 16S rRNA in bridges B5 and B8.

Binds to 23S rRNA. Forms part of two intersubunit bridges in the 70S ribosome. The sequence is that of Large ribosomal subunit protein uL14 from Pectobacterium atrosepticum (strain SCRI 1043 / ATCC BAA-672) (Erwinia carotovora subsp. atroseptica).